Consider the following 364-residue polypeptide: Phosphoserine aminotransferase (364 aa).

R46 serves as a coordination point for L-glutamate. Residues 80 to 81, W106, T157, D176, and Q199 contribute to the pyridoxal 5'-phosphate site; that span reads AR. K200 carries the post-translational modification N6-(pyridoxal phosphate)lysine. 241 to 242 lines the pyridoxal 5'-phosphate pocket; that stretch reads NT.

Belongs to the class-V pyridoxal-phosphate-dependent aminotransferase family. SerC subfamily. In terms of assembly, homodimer. Pyridoxal 5'-phosphate is required as a cofactor.

It is found in the cytoplasm. It carries out the reaction O-phospho-L-serine + 2-oxoglutarate = 3-phosphooxypyruvate + L-glutamate. It catalyses the reaction 4-(phosphooxy)-L-threonine + 2-oxoglutarate = (R)-3-hydroxy-2-oxo-4-phosphooxybutanoate + L-glutamate. Its pathway is amino-acid biosynthesis; L-serine biosynthesis; L-serine from 3-phospho-D-glycerate: step 2/3. It participates in cofactor biosynthesis; pyridoxine 5'-phosphate biosynthesis; pyridoxine 5'-phosphate from D-erythrose 4-phosphate: step 3/5. Its function is as follows. Catalyzes the reversible conversion of 3-phosphohydroxypyruvate to phosphoserine and of 3-hydroxy-2-oxo-4-phosphonooxybutanoate to phosphohydroxythreonine. The protein is Phosphoserine aminotransferase of Vibrio cholerae serotype O1 (strain ATCC 39315 / El Tor Inaba N16961).